The chain runs to 529 residues: Na(+)/H(+) antiporter NhaB (529 aa).

A run of 12 helical transmembrane segments spans residues phenylalanine 13–proline 33, isoleucine 34–phenylalanine 54, leucine 90–methionine 110, leucine 113–leucine 133, leucine 149–tyrosine 166, leucine 205–proline 225, phenylalanine 241–phenylalanine 261, glycine 306–isoleucine 326, glycine 327–glycine 347, glutamate 351–isoleucine 371, alanine 451–isoleucine 471, and valine 479–phenylalanine 499.

Belongs to the NhaB Na(+)/H(+) (TC 2.A.34) antiporter family.

It is found in the cell inner membrane. The catalysed reaction is 2 Na(+)(in) + 3 H(+)(out) = 2 Na(+)(out) + 3 H(+)(in). In terms of biological role, na(+)/H(+) antiporter that extrudes sodium in exchange for external protons. This Vibrio vulnificus (strain YJ016) protein is Na(+)/H(+) antiporter NhaB.